A 635-amino-acid chain; its full sequence is Transaminated amino acid decarboxylase (635 aa).

Lysine 588 is covalently cross-linked (Glycyl lysine isopeptide (Lys-Gly) (interchain with G-Cter in ubiquitin)).

The protein belongs to the TPP enzyme family. Requires Mg(2+) as cofactor. The cofactor is thiamine diphosphate.

It is found in the cytoplasm. The enzyme catalyses 4-methyl-2-oxopentanoate + H(+) = 3-methylbutanal + CO2. It carries out the reaction (S)-3-methyl-2-oxopentanoate + H(+) = 2-methylbutanal + CO2. The catalysed reaction is indole-3-pyruvate + H(+) = indole-3-acetaldehyde + CO2. It catalyses the reaction 3-phenylpyruvate + H(+) = 2-phenylacetaldehyde + CO2. The enzyme catalyses 4-methylsulfanyl-2-oxobutanoate + H(+) = 3-methylsulfanylpropanal + CO2. It carries out the reaction 3-(4-hydroxyphenyl)pyruvate + H(+) = (4-hydroxyphenyl)acetaldehyde + CO2. It participates in amino-acid degradation; Ehrlich pathway. One of five 2-oxo acid decarboxylases (PDC1, PDC5, PDC6, ARO10, and THI3) involved in amino acid catabolism. The enzyme catalyzes the decarboxylation of amino acids, which, in a first step, have been transaminated to the corresponding 2-oxo acids (alpha-keto-acids). In a third step, the resulting aldehydes are reduced to alcohols, collectively referred to as fusel oils or alcohols. Its preferred substrates are the transaminated amino acids derived from phenylalanine (phenylpyruvate), tryptophan (3-(indol-3-yl)pyruvate), and probably tyrosine (4-hydroxyphenylpyruvate), but also isoleucine ((3S)-3-methyl-2-oxopentanoate, also alpha-keto-beta-methylvalerate) and methionine (4-methylthio-2-oxobutanoate), whereas transaminated leucine (4-methyl-2-oxopentanoate, also alpha-keto-isocaproate) is a low efficiency substrate and transaminated valine and pyruvate are no substrates. In analogy to the pyruvate decarboxylases the enzyme may in a side-reaction catalyze condensation (or carboligation) reactions leading to the formation of 2-hydroxy ketone, collectively called acyloins. The chain is Transaminated amino acid decarboxylase (ARO10) from Saccharomyces cerevisiae (strain ATCC 204508 / S288c) (Baker's yeast).